Consider the following 639-residue polypeptide: mRNA export factor (639 aa).

Disordered regions lie at residues Met-1–Ser-45, Leu-63–Ala-287, and Cys-322–Arg-355. Residues Pro-142–Ser-152 are compositionally biased toward basic residues. The segment covering Pro-153–Gly-169 has biased composition (low complexity). Residues Val-175–Ala-189 are compositionally biased toward basic and acidic residues. A compositionally biased stretch (polar residues) spans His-203–Gln-215. Composition is skewed to basic and acidic residues over residues Arg-234–Ala-247 and Asp-326–Thr-348. Residues Cys-525, His-606, Cys-610, and Cys-615 each coordinate Zn(2+). The CHC2-type zinc finger occupies Cys-525–Cys-615.

This sequence belongs to the HHV-1 ICP27 protein family.

The protein localises to the host cytoplasm. It is found in the host nucleus. In terms of biological role, multifunctional regulator of the expression of viral genes that mediates nuclear export of viral intronless mRNAs. This immediate early (EI) protein promotes the nuclear export of viral intronless mRNAs. This chain is mRNA export factor, found in Amazona oratrix (yellow-headed parrot).